A 380-amino-acid polypeptide reads, in one-letter code: Ubiquitin-like protein 7 (380 aa).

Residues 18–98 (TPKSILRLPE…VLRKSWPEPD (81 aa)) form the Ubiquitin-like domain. Residues 200 to 313 (APMPGTDSSS…SSGVQSGTPI (114 aa)) form a disordered region. Over residues 206 to 221 (DSSSRSMPSSSYRDMP) the composition is skewed to low complexity. Residue Ser-230 is modified to Phosphoserine. Low complexity-rich tracts occupy residues 240–253 (TRST…SSRP) and 270–293 (SELA…TPGT). Polar residues predominate over residues 294-313 (QGHSSGTSPMSSGVQSGTPI). In terms of domain architecture, UBA spans 333-377 (SLQSQWQPQLQQLRDMGIQDDELSLRALQATGGDIQAALELIFAG).

As to quaternary structure, binds ubiquitin. Interacts with MAVS; this interaction enhances TRIM21-dependent 'Lys-27'-linked polyubiquitination of MAVS. Post-translationally, deubiquitinated by OTUD4 which stabilizes UBL7 expression. Ubiquitous. Highly expressed in heart, skeletal muscle, testis, thyroid and adrenal gland.

Its function is as follows. Interferon-stimulated protein that positively regulates RNA virus-triggered innate immune signaling. Mechanistically, promotes 'Lys-27'-linked polyubiquitination of MAVS through TRIM21 leading to enhanced the IFN signaling pathway. This chain is Ubiquitin-like protein 7 (UBL7), found in Homo sapiens (Human).